A 161-amino-acid polypeptide reads, in one-letter code: MKYDTSELCDIYQEDVNVVEPLFSNFGGRSSFGGQIITVKCFEDNGLLYDLLEQNGRGRILLVDGGGSVRRALVDAELARLATQNEWEGLVIYGAVRQVDDLEELDIGIQALAAIPVGAAGEGIGESDVRVNFGGVTFFSGDHLYADNTGIILSEDPLDIE.

Belongs to the RraA family. Homotrimer. Binds to both RNA-binding sites in the C-terminal region of Rne and to RhlB.

It is found in the cytoplasm. Its function is as follows. Globally modulates RNA abundance by binding to RNase E (Rne) and regulating its endonucleolytic activity. Can modulate Rne action in a substrate-dependent manner by altering the composition of the degradosome. Modulates RNA-binding and helicase activities of the degradosome. In Citrobacter koseri (strain ATCC BAA-895 / CDC 4225-83 / SGSC4696), this protein is Regulator of ribonuclease activity A.